The following is a 339-amino-acid chain: Tetraacyldisaccharide 4'-kinase (339 aa).

Residue T58–T65 participates in ATP binding.

The protein belongs to the LpxK family.

It carries out the reaction a lipid A disaccharide + ATP = a lipid IVA + ADP + H(+). Its pathway is glycolipid biosynthesis; lipid IV(A) biosynthesis; lipid IV(A) from (3R)-3-hydroxytetradecanoyl-[acyl-carrier-protein] and UDP-N-acetyl-alpha-D-glucosamine: step 6/6. Functionally, transfers the gamma-phosphate of ATP to the 4'-position of a tetraacyldisaccharide 1-phosphate intermediate (termed DS-1-P) to form tetraacyldisaccharide 1,4'-bis-phosphate (lipid IVA). The polypeptide is Tetraacyldisaccharide 4'-kinase (Shewanella baltica (strain OS155 / ATCC BAA-1091)).